The following is a 68-amino-acid chain: Large ribosomal subunit protein bL35 (68 aa).

The protein belongs to the bacterial ribosomal protein bL35 family.

This chain is Large ribosomal subunit protein bL35, found in Wolbachia pipientis subsp. Culex pipiens (strain wPip).